We begin with the raw amino-acid sequence, 286 residues long: Plasma membrane ascorbate-dependent reductase CYBRD1 (286 aa).

At 1–7 the chain is on the cytoplasmic side; it reads MAMEGYR. The chain crosses the membrane as a helical span at residues 8 to 32; sequence GFLGLLVSALLVGFLSVIFVLIWVL. One can recognise a Cytochrome b561 domain in the interval 15–220; that stretch reads SALLVGFLSV…FGALIFWIVT (206 aa). Residues 33–47 lie on the Extracellular side of the membrane; sequence HFREGLGWDGGALEF. A helical transmembrane segment spans residues 48–69; sequence NWHPVLAVTGFVFIQGIAIIVY. Heme b contacts are provided by His-50, Arg-70, and Lys-79. Residues 70–78 are Cytoplasmic-facing; the sequence is RLPWTWKCS. Residues Lys-79 and Lys-83 each contribute to the L-ascorbate site. The helical transmembrane segment at 79–105 threads the bilayer; that stretch reads KFLMKSIHAGLNAVAAILAIISVVAVF. His-86 serves as a coordination point for heme b. At 106–118 the chain is on the extracellular side; that stretch reads DYHNVRKIPHMYS. His-108 is a Fe(3+) binding site. Heme b is bound by residues 115 to 118 and His-120; that span reads HMYS. The chain crosses the membrane as a helical span at residues 119 to 144; sequence LHSWVGLTVLILYIQQLVVGFFIFLL. Residues 145 to 151 are Cytoplasmic-facing; that stretch reads PWAPPSL. Arg-152 is a binding site for L-ascorbate. Residues 152–179 traverse the membrane as a helical segment; that stretch reads RAIVMPIHVYSGLLLFGTVIATVLMGVT. Heme b contacts are provided by His-159 and Glu-180. At 180–197 the chain is on the extracellular side; sequence EKLFFVLKNPSYHSFPPE. A helical transmembrane segment spans residues 198–222; it reads GVFTNTLGLLILVFGALIFWIVTRP. The Cytoplasmic segment spans residues 223–286; sequence QWKRPREPGS…LVDTGQRSTM (64 aa). Position 225 (Lys-225) interacts with heme b. Residue Ser-232 is modified to Phosphoserine. Thr-285 carries the phosphothreonine modification.

As to quaternary structure, homodimer. The cofactor is heme b. Highly expressed in all regions of the small intestine and colon studied in suckling animals. However, after weaning, when iron absorption declines significantly, strong expression is retained only in the duodenum. Also expressed in respiratory epithelium.

The protein resides in the cell membrane. It is found in the apical cell membrane. It catalyses the reaction Fe(3+)(out) + L-ascorbate(in) = monodehydro-L-ascorbate radical(in) + Fe(2+)(out) + H(+). It carries out the reaction Cu(2+)(out) + L-ascorbate(in) = Cu(+)(out) + monodehydro-L-ascorbate radical(in) + H(+). The catalysed reaction is monodehydro-L-ascorbate radical(out) + L-ascorbate(in) = monodehydro-L-ascorbate radical(in) + L-ascorbate(out). Its function is as follows. Plasma membrane reductase that uses cytoplasmic ascorbate as an electron donor to reduce extracellular Fe(3+) into Fe(2+). Probably functions in dietary iron absorption at the brush border of duodenal enterocytes by producing Fe(2+), the divalent form of iron that can be transported into enterocytes. It is also able to reduce extracellular monodehydro-L-ascorbate and may be involved in extracellular ascorbate regeneration by erythrocytes in blood. May also act as a ferrireductase in airway epithelial cells. May also function as a cupric transmembrane reductase. The protein is Plasma membrane ascorbate-dependent reductase CYBRD1 of Rattus norvegicus (Rat).